Here is a 279-residue protein sequence, read N- to C-terminus: MAFQGTSRTLTQQSSAATSDELQKILFSPEAIKKMAAECDLGRHHWMRADNAISVRPLVPEVTHGRIASFFKSGYDAGELCSKGCVSVPQVLCAVTRTVSTDAEGSLRIYLPDLGDKELSPIDKQCVTLHNHHLPALVSFQPTYDCPMETVGNRKRCFAVVIERHGYIGYTGTTASVCSNWQARFSSKNNNYTHIAAGKTLVLPFNRLAEQTKPSAVARLLKSQLNNMGSSQYVLTDSKINQNARSESEELNVESPPAAIGSSVASRFESFRPQVVNGL.

The protein belongs to the cucumovirus movement protein family.

The protein resides in the host cell junction. It is found in the host plasmodesma. Transports viral genome to neighboring plant cells directly through plasmosdesmata, without any budding. The movement protein allows efficient cell to cell propagation, by bypassing the host cell wall barrier. Acts by forming a tubular structure at the host plasmodesmata, enlarging it enough to allow free passage of virion capsids. The protein is Movement protein of Cucumber mosaic virus (strain As) (CMV).